Reading from the N-terminus, the 299-residue chain is Nicotinate-nucleotide pyrophosphorylase [carboxylating] (299 aa).

An important for hexamer formation region spans residues 8–12 (FLLPP). Residues arginine 102, 138 to 139 (RK), 160 to 161 (HR), lysine 171, glutamate 201, aspartate 222, 248 to 250 (SGG), and glycine 270 each bind quinolinate.

Belongs to the NadC/ModD family. As to quaternary structure, hexamer formed by 3 homodimers.

It carries out the reaction nicotinate beta-D-ribonucleotide + CO2 + diphosphate = quinolinate + 5-phospho-alpha-D-ribose 1-diphosphate + 2 H(+). It functions in the pathway cofactor biosynthesis; NAD(+) biosynthesis; nicotinate D-ribonucleotide from quinolinate: step 1/1. Its function is as follows. Involved in the catabolism of quinolinic acid (QA). The protein is Nicotinate-nucleotide pyrophosphorylase [carboxylating] (Qprt) of Rattus norvegicus (Rat).